Here is a 513-residue protein sequence, read N- to C-terminus: Histidine ammonia-lyase (513 aa).

Residues 145-147 constitute a cross-link (5-imidazolinone (Ala-Gly)); that stretch reads ASG. Serine 146 is modified (2,3-didehydroalanine (Ser)).

Belongs to the PAL/histidase family. Post-translationally, contains an active site 4-methylidene-imidazol-5-one (MIO), which is formed autocatalytically by cyclization and dehydration of residues Ala-Ser-Gly.

The protein resides in the cytoplasm. It carries out the reaction L-histidine = trans-urocanate + NH4(+). The protein operates within amino-acid degradation; L-histidine degradation into L-glutamate; N-formimidoyl-L-glutamate from L-histidine: step 1/3. The protein is Histidine ammonia-lyase of Vibrio vulnificus (strain YJ016).